The following is a 459-amino-acid chain: ATP-dependent protease ATPase subunit HslU (459 aa).

ATP is bound by residues V18, 60–65, D272, E337, and R409; that span reads GVGKTE.

The protein belongs to the ClpX chaperone family. HslU subfamily. A double ring-shaped homohexamer of HslV is capped on each side by a ring-shaped HslU homohexamer. The assembly of the HslU/HslV complex is dependent on binding of ATP.

It is found in the cytoplasm. Functionally, ATPase subunit of a proteasome-like degradation complex; this subunit has chaperone activity. The binding of ATP and its subsequent hydrolysis by HslU are essential for unfolding of protein substrates subsequently hydrolyzed by HslV. HslU recognizes the N-terminal part of its protein substrates and unfolds these before they are guided to HslV for hydrolysis. The protein is ATP-dependent protease ATPase subunit HslU of Thermoanaerobacter pseudethanolicus (strain ATCC 33223 / 39E) (Clostridium thermohydrosulfuricum).